The chain runs to 438 residues: MYAENITNAVEIQDIRAREILDSRGNPTIEADVILADGSMGRAAAPSGASTGSREALELRDGDKSRYLGKGVTKAVANVNSQIRSALLESDATDQQGIDNILIELDGTANKDHLGANAMLAVSLATAKAAAISQNLPLHQYIANLRGQTSLTMPVPMMNILNGGEHADNTVDIQEFMIEPTGFSSFSEALRAGVEIFHSLKSVLKSQGLNTAVGDEGGFAPNLRTNEEAITVIMQAIEQAGYKAGKDIHLALDCAASEFYKNGQYILAGEGNKTFDSQGFSDYLVKLTEQYPIISIEDGLDESDWEGWAYLTSKLGKKVQLVGDDLFVTNPAILQEGIDKQIANAILIKFNQIGTLSETLDAIYLAKKNGYATVISHRSGETEDSTIADLAVGTAAGQIKTGSLCRSDRVAKYNQLLRIEQQVRASYRGGEEFIGLRG.

Residue glutamine 174 participates in (2R)-2-phosphoglycerate binding. The active-site Proton donor is the glutamate 216. Mg(2+) contacts are provided by aspartate 253, glutamate 297, and aspartate 324. Residues lysine 349, arginine 378, serine 379, and lysine 400 each coordinate (2R)-2-phosphoglycerate. The active-site Proton acceptor is the lysine 349.

Belongs to the enolase family. As to quaternary structure, component of the RNA degradosome, a multiprotein complex involved in RNA processing and mRNA degradation. Mg(2+) serves as cofactor.

The protein localises to the cytoplasm. Its subcellular location is the secreted. It is found in the cell surface. It catalyses the reaction (2R)-2-phosphoglycerate = phosphoenolpyruvate + H2O. The protein operates within carbohydrate degradation; glycolysis; pyruvate from D-glyceraldehyde 3-phosphate: step 4/5. In terms of biological role, catalyzes the reversible conversion of 2-phosphoglycerate (2-PG) into phosphoenolpyruvate (PEP). It is essential for the degradation of carbohydrates via glycolysis. This is Enolase from Psychrobacter sp. (strain PRwf-1).